A 281-amino-acid chain; its full sequence is 40S small subunit processome assembly factor 1 (281 aa).

The interval 29–141 (LGETEGETEQ…DEDEPAKNKT (113 aa)) is disordered. Residues Ser67 and Ser75 each carry the phosphoserine modification. Lys172 bears the N6-acetyllysine mark. The interval 221-254 (ETDIFKKKKKKGRGQEDRRSKKSAPSILSSGQVG) is disordered. Ser267 is modified (phosphoserine).

As to quaternary structure, part of the small subunit (SSU) processome, composed of more than 70 proteins and the RNA chaperone small nucleolar RNA (snoRNA) U3.

The protein resides in the chromosome. It is found in the nucleus. It localises to the nucleolus. Part of the small subunit (SSU) processome, first precursor of the small eukaryotic ribosomal subunit. During the assembly of the SSU processome in the nucleolus, many ribosome biogenesis factors, an RNA chaperone and ribosomal proteins associate with the nascent pre-rRNA and work in concert to generate RNA folding, modifications, rearrangements and cleavage as well as targeted degradation of pre-ribosomal RNA by the RNA exosome. Prevents helicase DHX37 to be recruited before post-A1 state. This chain is 40S small subunit processome assembly factor 1, found in Mus musculus (Mouse).